Here is a 631-residue protein sequence, read N- to C-terminus: Pescadillo homolog (631 aa).

The 94-residue stretch at 321–414 (RLRTLFKGLK…QLLPTNDYFL (94 aa)) folds into the BRCT domain. Over residues 428-442 (SKRDSYIPPEEKALH) the composition is skewed to basic and acidic residues. 3 disordered regions span residues 428-471 (SKRD…EADQ), 489-561 (YKKY…VDEH), and 602-631 (ADNK…KLVK). Serine 453 and serine 457 each carry phosphoserine. 2 stretches are compositionally biased toward acidic residues: residues 453–471 (SEEE…EADQ) and 498–525 (VNED…EDVD). Residues 526-538 (EQTKRKQQEKEKM) show a composition bias toward basic and acidic residues. Positions 544 to 553 (KVHKVNKRQV) are enriched in basic residues. Residues 591–631 (WLLRKKRRNIDADNKEAKKAAKREARKQAAEAAARAAKLVK) are a coiled coil. Residues 602 to 619 (ADNKEAKKAAKREARKQA) show a composition bias toward basic and acidic residues. A compositionally biased stretch (low complexity) spans 620-631 (AEAAARAAKLVK).

The protein belongs to the pescadillo family.

The protein localises to the nucleus. It localises to the nucleolus. Its subcellular location is the nucleoplasm. Its function is as follows. Required for maturation of ribosomal RNAs and formation of the large ribosomal subunit. In Drosophila pseudoobscura pseudoobscura (Fruit fly), this protein is Pescadillo homolog.